The following is a 523-amino-acid chain: Excitatory amino acid transporter 3 (523 aa).

Topologically, residues 1–18 (MGKPTSSGCDWRRFLRNH) are cytoplasmic. A helical membrane pass occupies residues 19-38 (WLLLSTVAAVVLGIVLGVVV). Residues 39–61 (RGHSELSNLDKFYFAFPGEILMR) lie on the Extracellular side of the membrane. Residues 62-82 (MLKLVILPLIVSSMITGVAAL) traverse the membrane as a helical segment. Topologically, residues 83–93 (DSNVSGKIGLR) are cytoplasmic. Residues 94 to 114 (AVVYYFSTTVIAVILGIVLVV) traverse the membrane as a helical segment. Na(+)-binding residues include Tyr-98, Thr-101, and Thr-102. Topologically, residues 115–204 (SIKPGVTQKV…KTKEYKIVGL (90 aa)) are extracellular. N-linked (GlcNAc...) asparagine glycosylation is found at Asn-128, Asn-178, and Asn-194. The chain crosses the membrane as a helical span at residues 205–228 (YSDGINVLGLIIFCLVFGLVIGKM). Residues 229-237 (GEKGQILVD) lie on the Cytoplasmic side of the membrane. Residues 238-265 (FFNALSDATMKIVQIIMCYMPIGILFLI) form a helical membrane-spanning segment. Topologically, residues 266–285 (AGKIIEVEDWEIFRKLGLYM) are extracellular. Residues 286 to 307 (ATVLSGLAIHSLIVLPLLYFIV) traverse the membrane as a helical segment. Residues 308 to 312 (VRKNP) lie on the Cytoplasmic side of the membrane. Positions 313–343 (FRFALGMAQALLTALMISSSSATLPVTFRCA) form an intramembrane region, discontinuously helical. Residues Ser-330 and Ser-332 each coordinate L-aspartate. The Cytoplasmic portion of the chain corresponds to 344 to 352 (EEKNQVDKR). The helical transmembrane segment at 353 to 379 (ITRFVLPVGATINMDGTALYEAVAAVF) threads the bilayer. Residues Gly-361, Thr-363, Asn-365, and Asp-367 each contribute to the Na(+) site. Thr-369 serves as a coordination point for L-aspartate. At 380-392 (IAQLNGLDLSIGQ) the chain is on the extracellular side. The discontinuously helical intramembrane region spans 393 to 426 (IVTISITATAASIGAAGVPQAGLVTMVIVLSAVG). Positions 404, 405, and 407 each coordinate Na(+). Position 410 (Val-410) interacts with L-aspartate. Residues 427–439 (LPAEDVTLIIAVD) are Extracellular-facing. A helical transmembrane segment spans residues 440-461 (WLLDRFRTMVNVLGDAFGTGIV). 3 residues coordinate L-aspartate: Arg-446, Thr-447, and Asn-450. Positions 450 and 454 each coordinate Na(+). The Cytoplasmic segment spans residues 462–523 (EKLSKKELEQ…TISFTQTSQF (62 aa)). Phosphoserine is present on residues Ser-516 and Ser-521.

The protein belongs to the dicarboxylate/amino acid:cation symporter (DAACS) (TC 2.A.23) family. SLC1A1 subfamily. As to quaternary structure, homotrimer. Interacts with ARL6IP5. Interacts with RTN2 (via N-terminus); the interaction promotes cell surface expression of SLC1A1. Interacts with SORCS2; this interaction is important for normal expression at the cell membrane. As to expression, detected on neurons in the brain cortex, dentate gyrus and hippocampus CA2 region (at protein level). Expressed in whole brain, brain cortex, hippocampus, cerebellum, lung, kidney, small intestine and skeletal muscle. Expressed in the renal outer medulla, medullary ray and cortex (at protein level).

The protein resides in the cell membrane. It is found in the apical cell membrane. The protein localises to the synapse. It localises to the synaptosome. Its subcellular location is the early endosome membrane. The protein resides in the late endosome membrane. It is found in the recycling endosome membrane. The enzyme catalyses K(+)(in) + L-glutamate(out) + 3 Na(+)(out) + H(+)(out) = K(+)(out) + L-glutamate(in) + 3 Na(+)(in) + H(+)(in). It carries out the reaction K(+)(in) + L-aspartate(out) + 3 Na(+)(out) + H(+)(out) = K(+)(out) + L-aspartate(in) + 3 Na(+)(in) + H(+)(in). The catalysed reaction is D-aspartate(out) + K(+)(in) + 3 Na(+)(out) + H(+)(out) = D-aspartate(in) + K(+)(out) + 3 Na(+)(in) + H(+)(in). It catalyses the reaction K(+)(in) + L-cysteine(out) + 3 Na(+)(out) + H(+)(out) = K(+)(out) + L-cysteine(in) + 3 Na(+)(in) + H(+)(in). Functionally, sodium-dependent, high-affinity amino acid transporter that mediates the uptake of L-glutamate and also L-aspartate and D-aspartate. Can also transport L-cysteine. Functions as a symporter that transports one amino acid molecule together with two or three Na(+) ions and one proton, in parallel with the counter-transport of one K(+) ion. Mediates Cl(-) flux that is not coupled to amino acid transport; this avoids the accumulation of negative charges due to aspartate and Na(+) symport. Plays an important role in L-glutamate and L-aspartate reabsorption in renal tubuli. Plays a redundant role in the rapid removal of released glutamate from the synaptic cleft, which is essential for terminating the postsynaptic action of glutamate. Contributes to glutathione biosynthesis and protection against oxidative stress via its role in L-glutamate and L-cysteine transport. Negatively regulated by ARL6IP5. This is Excitatory amino acid transporter 3 (Slc1a1) from Mus musculus (Mouse).